The following is a 753-amino-acid chain: Catalase-peroxidase (753 aa).

A cross-link (tryptophyl-tyrosyl-methioninium (Trp-Tyr) (with M-269)) is located at residues 91–243 (WHSAGTYRIG…LGAVQMGLIY (153 aa)). The active-site Proton acceptor is His-92. Residues 243–269 (YVNPEGPDGNPDPLAAAHDIRETFARM) constitute a cross-link (tryptophyl-tyrosyl-methioninium (Tyr-Met) (with W-91)). His-284 lines the heme b pocket.

Belongs to the peroxidase family. Peroxidase/catalase subfamily. In terms of assembly, homodimer or homotetramer. Requires heme b as cofactor. Post-translationally, formation of the three residue Trp-Tyr-Met cross-link is important for the catalase, but not the peroxidase activity of the enzyme.

The enzyme catalyses H2O2 + AH2 = A + 2 H2O. It carries out the reaction 2 H2O2 = O2 + 2 H2O. In terms of biological role, bifunctional enzyme with both catalase and broad-spectrum peroxidase activity. The polypeptide is Catalase-peroxidase (Paraburkholderia xenovorans (strain LB400)).